The chain runs to 652 residues: Transmembrane 9 superfamily member 12 (652 aa).

The first 20 residues, 1-20 (MFGVYRVFVLLVFVSQLCNG), serve as a signal peptide directing secretion. Over 21–286 (FYLPGSYMHT…LKMEGARVHW (266 aa)) the chain is Lumenal. Residues 287–307 (FSILNSLMVIFFLAGIVFVIF) traverse the membrane as a helical segment. The Cytoplasmic segment spans residues 308-362 (LRTVRRDLTKYEELDKEAQAQMNEELSGWKLVVGDVFREPEMSKLLCIMVGDGVR). A helical membrane pass occupies residues 363–383 (ITGMAVVTIVFAALGFMSPAS). Residues 384–386 (RGM) lie on the Lumenal side of the membrane. A helical transmembrane segment spans residues 387–407 (LLTGMIILYLFLGIVAGYAGV). The Cytoplasmic segment spans residues 408–426 (RLWRTVKGTSEGWRSLSWS). A helical transmembrane segment spans residues 427–447 (IACFFPGIAFVILTVLNFLLW). At 448–460 (SSNSTGAIPISLY) the chain is on the lumenal side. A helical membrane pass occupies residues 461–481 (FELLALWFCISVPLTLFGGFL). At 482–510 (GTRAEAIQFPVRTNQIPREIPERKYPSWL) the chain is on the cytoplasmic side. The helical transmembrane segment at 511–531 (LVLGAGTLPFGTLFIELFFIF) threads the bilayer. At 532 to 541 (SSIWLGRFYY) the chain is on the lumenal side. Residues 542-562 (VFGFLLIVLLLLVVVCAEVSV) traverse the membrane as a helical segment. Topologically, residues 563-580 (VLTYMHLCVEDWRWWWKA) are cytoplasmic. The helical transmembrane segment at 581 to 601 (FYASGSVALYVFAYSINYLVF) threads the bilayer. The Lumenal segment spans residues 602–613 (DLQSLSGPVSAM). Residues 614 to 634 (LYIGYSLLMAIAIMLATGTIG) form a helical membrane-spanning segment. Residues 635–652 (FLTSFYFVHYLFSSVKID) lie on the Cytoplasmic side of the membrane. Residues 641 to 646 (FVHYLF) carry the Endoplasmic reticulum export signal motif. The Golgi retention signal signature appears at 650–652 (KID).

This sequence belongs to the nonaspanin (TM9SF) (TC 9.A.2) family.

Its subcellular location is the endosome membrane. It is found in the golgi apparatus membrane. In Arabidopsis thaliana (Mouse-ear cress), this protein is Transmembrane 9 superfamily member 12.